Here is a 201-residue protein sequence, read N- to C-terminus: ATP-dependent Clp protease proteolytic subunit (201 aa).

Catalysis depends on serine 98, which acts as the Nucleophile. Histidine 123 is an active-site residue.

This sequence belongs to the peptidase S14 family. As to quaternary structure, fourteen ClpP subunits assemble into 2 heptameric rings which stack back to back to give a disk-like structure with a central cavity, resembling the structure of eukaryotic proteasomes.

It is found in the cytoplasm. It carries out the reaction Hydrolysis of proteins to small peptides in the presence of ATP and magnesium. alpha-casein is the usual test substrate. In the absence of ATP, only oligopeptides shorter than five residues are hydrolyzed (such as succinyl-Leu-Tyr-|-NHMec, and Leu-Tyr-Leu-|-Tyr-Trp, in which cleavage of the -Tyr-|-Leu- and -Tyr-|-Trp bonds also occurs).. Functionally, cleaves peptides in various proteins in a process that requires ATP hydrolysis. Has a chymotrypsin-like activity. Plays a major role in the degradation of misfolded proteins. The sequence is that of ATP-dependent Clp protease proteolytic subunit from Rickettsia akari (strain Hartford).